The following is a 217-amino-acid chain: Dihydroflavonol 4-reductase (217 aa).

NADP(+) contacts are provided by Lys-27 and Tyr-146.

It belongs to the NAD(P)-dependent epimerase/dehydratase family. Dihydroflavonol-4-reductase subfamily.

It carries out the reaction a (2R,3S,4S)-leucoanthocyanidin + NADP(+) = a (2R,3R)-dihydroflavonol + NADPH + H(+). It catalyses the reaction (2S)-flavan-4-ol + NADP(+) = (2S)-flavanone + NADPH + H(+). The protein operates within pigment biosynthesis; anthocyanin biosynthesis. In terms of biological role, bifunctional enzyme involved in flavonoid metabolism. The protein is Dihydroflavonol 4-reductase (DFR1) of Medicago sativa (Alfalfa).